A 493-amino-acid chain; its full sequence is Probable glycine dehydrogenase (decarboxylating) subunit 2 (493 aa).

The residue at position 269 (Lys-269) is an N6-(pyridoxal phosphate)lysine.

It belongs to the GcvP family. C-terminal subunit subfamily. As to quaternary structure, the glycine cleavage system is composed of four proteins: P, T, L and H. In this organism, the P 'protein' is a heterodimer of two subunits. Requires pyridoxal 5'-phosphate as cofactor.

It catalyses the reaction N(6)-[(R)-lipoyl]-L-lysyl-[glycine-cleavage complex H protein] + glycine + H(+) = N(6)-[(R)-S(8)-aminomethyldihydrolipoyl]-L-lysyl-[glycine-cleavage complex H protein] + CO2. Functionally, the glycine cleavage system catalyzes the degradation of glycine. The P protein binds the alpha-amino group of glycine through its pyridoxal phosphate cofactor; CO(2) is released and the remaining methylamine moiety is then transferred to the lipoamide cofactor of the H protein. This chain is Probable glycine dehydrogenase (decarboxylating) subunit 2, found in Chloroherpeton thalassium (strain ATCC 35110 / GB-78).